The sequence spans 93 residues: MLKPLGDRVVLEVEEKEQKVGGFVIAGAGQDATKTAKVVAVGEGIRTLNGELVAPSVKAGDTVLVESHVGTEVKDGEEKYLVVNEVNILAIVE.

The protein belongs to the GroES chaperonin family. As to quaternary structure, heptamer of 7 subunits arranged in a ring. Interacts with the chaperonin GroEL.

Its subcellular location is the cytoplasm. In terms of biological role, together with the chaperonin GroEL, plays an essential role in assisting protein folding. The GroEL-GroES system forms a nano-cage that allows encapsulation of the non-native substrate proteins and provides a physical environment optimized to promote and accelerate protein folding. GroES binds to the apical surface of the GroEL ring, thereby capping the opening of the GroEL channel. This Streptococcus intermedius protein is Co-chaperonin GroES.